A 90-amino-acid polypeptide reads, in one-letter code: Probable Fe(2+)-trafficking protein (90 aa).

Belongs to the Fe(2+)-trafficking protein family. As to quaternary structure, monomer.

In terms of biological role, could be a mediator in iron transactions between iron acquisition and iron-requiring processes, such as synthesis and/or repair of Fe-S clusters in biosynthetic enzymes. This Proteus mirabilis (strain HI4320) protein is Probable Fe(2+)-trafficking protein.